Here is a 909-residue protein sequence, read N- to C-terminus: E3 ubiquitin-protein ligase HACE1 (909 aa).

Residues 1 to 21 form an N-terminal helix important for homodimerization region; it reads MERAMEQLNRLTRSLRRARTV. 7 ANK repeats span residues 23–55, 64–93, 97–126, 130–159, 163–192, 196–226, and 228–253; these read LPED…NSKF, VKRS…NPNY, SGCT…DVNI, EGLT…DVDV, MGQT…DINR, SGAT…YLPD, and NGVT…QYHP. Residues 398-433 form a disordered region; the sequence is QDQEAPSLSAFEPPGPGSYESLPPGPGDSKPEVLAG. The HECT domain occupies 574–909; sequence NCAKLKQGIA…HCGSYGYTMA (336 aa). Cys-876 serves as the catalytic Glycyl thioester intermediate.

Homodimer. The homodimer is autoinhibited and stabilized by its N-terminal helix. Interacts with RAB1 (RAB1A, RAB1B or RAB1C), RAB4 (RAB4A or RAB4B) and RAB11 (RAB11A or RAB11B); in a GTP-dependent manner. Interacts with the 26S proteasomal complex through the 20S core proteasomal subunit. Interacts with RARB. In terms of processing, autoubiquitinated.

The protein resides in the golgi apparatus. It is found in the golgi stack membrane. Its subcellular location is the cytoplasm. It localises to the endoplasmic reticulum. It carries out the reaction S-ubiquitinyl-[E2 ubiquitin-conjugating enzyme]-L-cysteine + [acceptor protein]-L-lysine = [E2 ubiquitin-conjugating enzyme]-L-cysteine + N(6)-ubiquitinyl-[acceptor protein]-L-lysine.. It participates in protein modification; protein ubiquitination. With respect to regulation, sterically autoinhibited in its dimeric state. E3 ubiquitin-protein ligase involved in Golgi membrane fusion and regulation of small GTPases. Acts as a regulator of Golgi membrane dynamics during the cell cycle: recruited to Golgi membrane by Rab proteins and regulates postmitotic Golgi membrane fusion. Acts by mediating ubiquitination during mitotic Golgi disassembly, ubiquitination serving as a signal for Golgi reassembly later, after cell division. Specifically binds GTP-bound RAC1, mediating ubiquitination and subsequent degradation of active RAC1, thereby playing a role in host defense against pathogens. May also act as a transcription regulator via its interaction with RARB. The polypeptide is E3 ubiquitin-protein ligase HACE1 (Hace1) (Mus musculus (Mouse)).